The primary structure comprises 589 residues: Complement component C8 beta chain (589 aa).

Residues 1 to 31 (MKTGAQVWRALAKSCLLCAALGCLHLPGARG) form the signal peptide. The propeptide occupies 32 to 53 (EKPDFFETNAVNGSLVRSRPVR). An N-linked (GlcNAc...) asparagine glycan is attached at N43. Residues 63-116 (DCQLSTWSSWTACDPCQKKRYRHTYLLRPSQFYGELCDFSDKEVEDCVTNRACR) form the TSP type-1 1 domain. 7 disulfides stabilise this stretch: C64–C99, C75–C109, C78–C115, C121–C132, C126–C145, C139–C154, and C161–C199. C-linked (Man) tryptophan glycans are attached at residues W69 and W72. In terms of domain architecture, LDL-receptor class A spans 120–155 (RCEGFVCAQTGRCVNRRLLCNGDNDCGDQSDEANCR). Ca(2+) is bound by residues L137, N140, D142, D144, D150, and E151. Residues 157 to 503 (IYKKCSQDME…EFQMEVSSCR (347 aa)) enclose the MACPF domain. N242 carries N-linked (GlcNAc...) asparagine glycosylation. The next 4 beta stranded transmembrane spans lie at 251-258 (SSFKFGFK), 261-268 (GLVEFGVR), 378-385 (AGGGFQIG), and 391-398 (VYLKLGVS). A disulfide bridge connects residues C377 and C402. T417 bears the Phosphothreonine mark. Disulfide bonds link C502–C549, C504–C520, C507–C522, and C524–C533. The region spanning 504-534 (CAPCRNNGVPILKESRCECICPAGFQGVACE) is the EGF-like domain. In terms of domain architecture, TSP type-1 2 spans 544 to 587 (DGKWSCWSDWSPCSGGRKTRQRQCNNPAPQRGGSPCSGPASETL). 2 C-linked (Man) tryptophan glycosylation sites follow: W550 and W553. C556 and C589 are oxidised to a cystine. Residues 556-589 (CSGGRKTRQRQCNNPAPQRGGSPCSGPASETLDC) form a disordered region.

This sequence belongs to the complement C6/C7/C8/C9 family. As to quaternary structure, heterotrimer of 3 chains: alpha (C8A), beta (C8B) and gamma (C8G); the alpha and gamma chains are disulfide bonded. Component of the membrane attack complex (MAC), composed of complement C5b, C6, C7, C8A, C8B, C8G and multiple copies of the pore-forming subunit C9. Post-translationally, N-glycosylated; contains one or two bound glycans. Not O-glycosylated.

The protein localises to the secreted. The protein resides in the target cell membrane. With respect to regulation, membrane attack complex (MAC) assembly is inhibited by CD59, thereby protecting self-cells from damage during complement activation. CD59 acts by binding to the beta-haipins of C8 (C8A and C8B), forming an intermolecular beta-sheet that prevents incorporation of the multiple copies of C9 required for complete formation of the osmolytic pore. MAC assembly is also inhibited by clusterin (CLU) chaperones that inhibit polymerization of C9. Its function is as follows. Component of the membrane attack complex (MAC), a multiprotein complex activated by the complement cascade, which inserts into a target cell membrane and forms a pore, leading to target cell membrane rupture and cell lysis. The MAC is initiated by proteolytic cleavage of C5 into complement C5b in response to the classical, alternative, lectin and GZMK complement pathways. The complement pathways consist in a cascade of proteins that leads to phagocytosis and breakdown of pathogens and signaling that strengthens the adaptive immune system. C8B, together with C8A and C8G, inserts into the target membrane, but does not form pores by itself. During MAC assembly, associates with C5b, C6 and C7 to form the C5b8 intermediate complex that inserts into the target membrane and traverses the bilayer increasing membrane rigidity. This Rattus norvegicus (Rat) protein is Complement component C8 beta chain (C8b).